Consider the following 2065-residue polypeptide: Cytoskeleton-associated protein 5-A (2065 aa).

2 TOG regions span residues Met-1–Ala-240 and Val-264–Lys-515. HEAT repeat units follow at residues Glu-120 to Ser-157, Met-160 to Asp-197, Leu-270 to Ile-311, Gly-314 to Lys-352, Ser-356 to Leu-393, Asn-395 to Pro-432, and Leu-436 to Phe-477. The interval Asn-500–Val-574 is disordered. Residues Lys-538–Ala-568 show a composition bias toward low complexity. The interval Lys-644–Lys-808 is TOG 3. 2 HEAT repeats span residues Phe-652–Asp-689 and Ile-748–Ala-785. Residues Met-809–Pro-849 are disordered. Over residues Glu-829–Pro-841 the composition is skewed to acidic residues. The interval Asp-846–Lys-1090 is TOG 4. 4 HEAT repeats span residues Asp-852–Phe-889, Pro-892–His-929, Gln-933–Met-970, and Cys-1015–Lys-1052. Positions Ala-1074–Ser-1115 are enriched in low complexity. The segment at Ala-1074–Pro-1192 is disordered. Positions Pro-1126–Ser-1163 are enriched in polar residues. The interaction with microtubule lattice stretch occupies residues Asn-1150–Pro-1235. The segment at Gly-1191–Gln-1460 is TOG 5. HEAT repeat units follow at residues Gln-1251–Asp-1288, Met-1295–Met-1318, Glu-1319–Ala-1355, Lys-1357–Met-1390, and Pro-1395–Glu-1432. Disordered stretches follow at residues Asp-1982–Ala-2001 and Val-2028–Lys-2065. Residues Pro-2002 to Lys-2065 form an interaction with tacc3 region. Positions Ser-2038–Thr-2048 are enriched in low complexity. Residues Asp-2051–Lys-2065 are compositionally biased toward basic and acidic residues.

This sequence belongs to the TOG/XMAP215 family. In terms of assembly, interacts with tacc3; two molecules of ckap5 interact with 1 molecule of tacc3 probably mediated by coiled coil domains forming a four-helix bundle. Interacts with tacc3 and clathrin forming the TACC3/ch-TOG/clathrin complex located at spindle inter-microtubules bridges. Interacts with ndc80; indicative for an association with the NDC80 comnplex.

It localises to the cytoplasm. The protein resides in the cytoskeleton. It is found in the spindle pole. Its subcellular location is the spindle. The protein localises to the microtubule organizing center. It localises to the centrosome. The protein resides in the chromosome. It is found in the centromere. Its subcellular location is the kinetochore. Binds to the plus end of microtubules and regulates microtubule dynamics and microtubule organization. Acts as a processive microtubule polymerase. Promotes cytoplasmic microtubule nucleation and elongation. Plays a major role in organizing spindle poles. In spindle formation protects kinetochore microtubules from depolymerization by kif2c and has an essential role in centrosomal microtubule assembly independently of kif2c activity. Contributes to centrosome integrity. Acts as a component of the TACC3/ch-TOG/clathrin complex proposed to contribute to stabilization of kinetochore fibers of the mitotic spindle by acting as inter-microtubule bridge. Enhances the strength of NDC80 complex-mediated kinetochore-tip microtubule attachments. In Xenopus laevis (African clawed frog), this protein is Cytoskeleton-associated protein 5-A (ckap5-a).